The following is a 363-amino-acid chain: MSTSSILHLVREDLRAFAGYSSARTSALQGDVWLNANESAWGNPADPSASTRRYPDPQPQGLRSALAALYGCAPEQLLIGRGSDEAIDLLVRGLCVPERDAVLVTPPVFGMYAVCARLQNAPLVDVPLVDVPDGFHADIPAIVAAALASNAKLVFLCSPSNPAGSAIALDQIEPALQALQGKALVVVDEAYGEFSEVPSAVGLLARYDNLAVLRTLSKAHALAAARIGTLIANAELIAVLRRCQAPYPVPTPCAAMAEQALSAPALEVTRRRIAEVRSERARVHKALVQLPGVRQVYPSQGNFLLVRFDDAEAAFQALLEAGVVVRDQRAVPRLSDALRITLGTHEQNERVLSALQRTQEAAA.

Residue lysine 218 is modified to N6-(pyridoxal phosphate)lysine.

It belongs to the class-II pyridoxal-phosphate-dependent aminotransferase family. Histidinol-phosphate aminotransferase subfamily. Homodimer. Requires pyridoxal 5'-phosphate as cofactor.

The enzyme catalyses L-histidinol phosphate + 2-oxoglutarate = 3-(imidazol-4-yl)-2-oxopropyl phosphate + L-glutamate. It participates in amino-acid biosynthesis; L-histidine biosynthesis; L-histidine from 5-phospho-alpha-D-ribose 1-diphosphate: step 7/9. The chain is Histidinol-phosphate aminotransferase from Xanthomonas oryzae pv. oryzae (strain MAFF 311018).